The following is a 241-amino-acid chain: MDRRSRPQLGRRARHNYNDLCPPIGRRAATALLWLSCSIALLRALATSSTRAQQRAAAQRRTFLNAHHRSAAQVFPEPPESDHEDTDFEPSLPECPEYQEEEFDYESETESESEIESETEFETESDTAPTTEPETEPEDEPGPVVPKRPTFHQSLTERLSALRLRSPDASPSRAPPSTQESESPRQGEEPEDKDPRDPEESEEPKEEEKQQQHRCKPKKPTRRDPSPESPSKRGAIPIRRH.

The first 46 residues, 1–46 (MDRRSRPQLGRRARHNYNDLCPPIGRRAATALLWLSCSIALLRALA), serve as a signal peptide directing secretion. The interval 71-241 (AAQVFPEPPE…KRGAIPIRRH (171 aa)) is disordered. Acidic residues predominate over residues 97–125 (EYQEEEFDYESETESESEIESETEFETES). Residues 167–177 (PDASPSRAPPS) are compositionally biased toward low complexity. Basic and acidic residues predominate over residues 182–198 (ESPRQGEEPEDKDPRDP). Basic residues predominate over residues 212–221 (QHRCKPKKPT).

It belongs to the NESP55 family. In terms of processing, binds keratan sulfate chains. Post-translationally, may be proteolytically processed to give rise to a number of active peptides. In terms of tissue distribution, highly expressed in adrenal medulla and anterior and posterior pituitary. In the brain, detected in hypothalamus, hippocampus, caudate nucleus, thalamus and, in significantly lower amounts, in the cerebellum.

The protein localises to the cytoplasmic vesicle. Its subcellular location is the secretory vesicle. The protein resides in the secreted. In Bos taurus (Bovine), this protein is Neuroendocrine secretory protein 55.